The following is a 353-amino-acid chain: Mitogen-activated protein kinase FUS3 (353 aa).

One can recognise a Protein kinase domain in the interval 13 to 309; it reads FQLKSLLGEG…AKEALEHPYL (297 aa). ATP-binding positions include 19–27 and K42; that span reads LGEGAYGVV. Residue D137 is the Proton acceptor of the active site. Phosphothreonine is present on T180. The TXY signature appears at 180 to 182; that stretch reads TEY. At Y182 the chain carries Phosphotyrosine. Residue K345 forms a Glycyl lysine isopeptide (Lys-Gly) (interchain with G-Cter in ubiquitin) linkage.

This sequence belongs to the protein kinase superfamily. CMGC Ser/Thr protein kinase family. MAP kinase subfamily. As to quaternary structure, in the nucleus, FUS3 forms a complex with DIG1, DIG2 and STE12. The interaction of FUS3 with STE12 depends on the presence of both DIG1 and DIG2. STE12 is lost from FUS3/DIG1/DIG2 complex after pheromone treatment. During its activation and phosphorylation, FUS3 forms a membrane-associated complex with the scaffold protein STE5, the MAPKK STE7, the MAPKKK STE11, and the G-protein beta subunit GBB/STE4; interacting directly with STE7 and STE5. Mg(2+) serves as cofactor. In terms of processing, dually phosphorylated on Thr-180 and Tyr-182 by STE7 in response to pheromone induction, which activates the enzyme. Activated FUS3 initiates a feedback signal, down-regulating phosphorylation of both, FUS3 and KSS1.

The protein resides in the nucleus. It is found in the cytoplasm. Its subcellular location is the periplasm. It catalyses the reaction L-seryl-[protein] + ATP = O-phospho-L-seryl-[protein] + ADP + H(+). It carries out the reaction L-threonyl-[protein] + ATP = O-phospho-L-threonyl-[protein] + ADP + H(+). With respect to regulation, activated by tyrosine and threonine phosphorylation after pheromone treatment. In terms of biological role, together with closely related KSS1, FUS3 is the final kinase in the signal transduction cascade regulating activation/repression of the mating and filamentation pathways, induced by pheromone and nitrogen/carbon limitation, respectively. Phosphorylated FUS3 activates the mating but suppresses the filamentation pathway, whereas activated KSS1 activates both pathways. Pheromone-activated FUS3 functions by inhibiting the binding of the transcriptional activator STE12 to filamentation specific genes while inducing its binding to and activity at mating specific genes. Non-activated FUS3 has a repressive effect on STE12 transcriptional activity. KSS1 can partially compensate for the lack of FUS3 but mating efficiency is reduced and the filamentation program is partially activated upon pheromone signaling. FUS3 phosphorylates STE7, STE5, FAR1, DIG1, DIG2 and STE12. This Saccharomyces cerevisiae (strain ATCC 204508 / S288c) (Baker's yeast) protein is Mitogen-activated protein kinase FUS3 (FUS3).